Here is a 904-residue protein sequence, read N- to C-terminus: E3 SUMO-protein ligase SIZ1 (904 aa).

Positions 1-13 (MINLEDYWEDETP) are enriched in acidic residues. Positions 1–21 (MINLEDYWEDETPGPDREPTN) are disordered. An SAP domain is found at 34–68 (MELLKVSELKDICRSVSFPVSGRKAVLQDLIRNFL). The disordered stretch occupies residues 122–170 (MEGPPTVQQQSPSVIRQSPTQRRKTSTTSSTSRAPPPTNPDASSSSSSF). Polar residues predominate over residues 127–136 (TVQQQSPSVI). A Phosphoserine modification is found at Ser-132. The span at 137-154 (RQSPTQRRKTSTTSSTSR) shows a compositional bias: low complexity. The 153-residue stretch at 162 to 314 (DASSSSSSFA…KLFGYIVEMI (153 aa)) folds into the PINIT domain. An SP-RING-type zinc finger spans residues 344 to 431 (EDEEMGLTTT…LQNCQKNVEQ (88 aa)). The Zn(2+) site is built by Cys-377, His-379, Cys-400, and Cys-403. Disordered stretches follow at residues 443-584 (ILED…DDDR), 596-616 (STNT…TLDP), and 672-733 (SPDV…ISDS). Positions 444-454 (LEDDDDSDSDS) are enriched in acidic residues. Basic and acidic residues predominate over residues 501 to 511 (NNHDDSNRHSN). Residues 512–553 (DNNNNSIKNNDSHNKNNNNNNNNNNNNNDNNNSIENNDSNSN) show a composition bias toward low complexity. 3 stretches are compositionally biased toward polar residues: residues 561–574 (RSNT…KNLM), 596–611 (STNT…SAPS), and 672–683 (SPDVSVSSPTPR). Positions 684–699 (NTASNASSSALSTPPL) are enriched in low complexity. Polar residues predominate over residues 721 to 733 (INSNSYTASISDS). At Ser-794 the chain carries Phosphoserine. The required for localization at the bud neck stretch occupies residues 794 to 904 (SLPTTEAITR…QDYGKKYNSG (111 aa)). Over residues 877–894 (RQLSNTSSTSPIMGTWKT) the composition is skewed to polar residues. Residues 877–904 (RQLSNTSSTSPIMGTWKTQDYGKKYNSG) are disordered.

This sequence belongs to the PIAS family. Interacts with UBC9 and CDC3. In terms of processing, phosphorylated in early M-phase. Post-translationally, autosumoylated upon ethanol stress.

It localises to the cytoplasm. It is found in the nucleus. Its subcellular location is the bud neck. The protein operates within protein modification; protein sumoylation. Functionally, acts as an E3 ligase mediating SUMO/Smt3 attachment to septins and PCNA. May be involved in chromosome maintenance. This chain is E3 SUMO-protein ligase SIZ1 (SIZ1), found in Saccharomyces cerevisiae (strain ATCC 204508 / S288c) (Baker's yeast).